We begin with the raw amino-acid sequence, 196 residues long: Dephospho-CoA kinase (196 aa).

The 194-residue stretch at R3–P196 folds into the DPCK domain. Residue G11–T16 coordinates ATP.

The protein belongs to the CoaE family.

It localises to the cytoplasm. The enzyme catalyses 3'-dephospho-CoA + ATP = ADP + CoA + H(+). Its pathway is cofactor biosynthesis; coenzyme A biosynthesis; CoA from (R)-pantothenate: step 5/5. Its function is as follows. Catalyzes the phosphorylation of the 3'-hydroxyl group of dephosphocoenzyme A to form coenzyme A. The protein is Dephospho-CoA kinase of Aquifex aeolicus (strain VF5).